A 213-amino-acid chain; its full sequence is Uridine kinase (213 aa).

Residue 15–22 (GASASGKS) participates in ATP binding.

The protein belongs to the uridine kinase family.

The protein resides in the cytoplasm. The catalysed reaction is uridine + ATP = UMP + ADP + H(+). It catalyses the reaction cytidine + ATP = CMP + ADP + H(+). It functions in the pathway pyrimidine metabolism; CTP biosynthesis via salvage pathway; CTP from cytidine: step 1/3. It participates in pyrimidine metabolism; UMP biosynthesis via salvage pathway; UMP from uridine: step 1/1. In Salmonella agona (strain SL483), this protein is Uridine kinase.